We begin with the raw amino-acid sequence, 302 residues long: UDP-N-acetylenolpyruvoylglucosamine reductase (302 aa).

The FAD-binding PCMH-type domain maps to 23–188 (KVGGNAEIFF…LKAVFKVNKG (166 aa)). The active site involves Arg-168. The active-site Proton donor is the Ser-217. Glu-287 is a catalytic residue.

Belongs to the MurB family. Requires FAD as cofactor.

It localises to the cytoplasm. The catalysed reaction is UDP-N-acetyl-alpha-D-muramate + NADP(+) = UDP-N-acetyl-3-O-(1-carboxyvinyl)-alpha-D-glucosamine + NADPH + H(+). Its pathway is cell wall biogenesis; peptidoglycan biosynthesis. Its function is as follows. Cell wall formation. This is UDP-N-acetylenolpyruvoylglucosamine reductase from Rickettsia bellii (strain RML369-C).